Reading from the N-terminus, the 147-residue chain is Large ribosomal subunit protein uL16c (147 aa).

Residues 1–17 (MLSPKRTRFRKQHRGRM) show a composition bias toward basic residues. Residues 1–20 (MLSPKRTRFRKQHRGRMKGI) form a disordered region.

The protein belongs to the universal ribosomal protein uL16 family. As to quaternary structure, part of the 50S ribosomal subunit.

It is found in the plastid. Its subcellular location is the chloroplast. The protein is Large ribosomal subunit protein uL16c of Ipomoea purpurea (Common morning glory).